Here is a 194-residue protein sequence, read N- to C-terminus: Putative NAD(P)H nitroreductase YfhC (194 aa).

FMN-binding positions include 20 to 22 (RRS), 147 to 148 (KI), and arginine 188.

The protein belongs to the nitroreductase family. FMN serves as cofactor.

The protein is Putative NAD(P)H nitroreductase YfhC (yfhC) of Bacillus subtilis (strain 168).